Reading from the N-terminus, the 240-residue chain is Thymidylate kinase (240 aa).

An ATP-binding site is contributed by 10–17 (GINGVGKS).

Belongs to the thymidylate kinase family.

The enzyme catalyses dTMP + ATP = dTDP + ADP. The protein operates within pyrimidine metabolism; dTTP biosynthesis. Its function is as follows. Catalyzes the conversion of dTMP to dTDP. In African swine fever virus (strain Badajoz 1971 Vero-adapted) (Ba71V), this protein is Thymidylate kinase (TMK).